Consider the following 161-residue polypeptide: Ribosome maturation factor RimP (161 aa).

It belongs to the RimP family.

It is found in the cytoplasm. Required for maturation of 30S ribosomal subunits. This is Ribosome maturation factor RimP from Rickettsia typhi (strain ATCC VR-144 / Wilmington).